A 147-amino-acid polypeptide reads, in one-letter code: Protein-export protein SecB (147 aa).

Belongs to the SecB family. In terms of assembly, homotetramer, a dimer of dimers. One homotetramer interacts with 1 SecA dimer.

Its subcellular location is the cytoplasm. One of the proteins required for the normal export of preproteins out of the cell cytoplasm. It is a molecular chaperone that binds to a subset of precursor proteins, maintaining them in a translocation-competent state. It also specifically binds to its receptor SecA. The sequence is that of Protein-export protein SecB from Neisseria meningitidis serogroup B (strain ATCC BAA-335 / MC58).